A 309-amino-acid polypeptide reads, in one-letter code: Ribosomal RNA small subunit methyltransferase H (309 aa).

S-adenosyl-L-methionine contacts are provided by residues 33–35, D53, F79, D100, and Q107; that span reads GGH.

Belongs to the methyltransferase superfamily. RsmH family.

It is found in the cytoplasm. The enzyme catalyses cytidine(1402) in 16S rRNA + S-adenosyl-L-methionine = N(4)-methylcytidine(1402) in 16S rRNA + S-adenosyl-L-homocysteine + H(+). Functionally, specifically methylates the N4 position of cytidine in position 1402 (C1402) of 16S rRNA. The protein is Ribosomal RNA small subunit methyltransferase H of Clostridium botulinum (strain 657 / Type Ba4).